The chain runs to 51 residues: Nawaprin (51 aa).

A WAP domain is found at 1–50; the sequence is NEKSGSCPDMSMPIPPLGICKTLCNSDSGCPNVQKCCKNGCGFMTCTTPV. 4 disulfide bridges follow: C7-C37, C20-C41, C24-C36, and C30-C46.

In terms of tissue distribution, expressed by the venom gland.

It is found in the secreted. In terms of biological role, damages membranes of susceptible bacteria. Has no hemolytic activity. Not toxic to mice. Does not inhibit the proteinases elastase and cathepsin G. This is Nawaprin from Naja nigricollis (Black-necked spitting cobra).